We begin with the raw amino-acid sequence, 504 residues long: Maturase K (504 aa).

The protein belongs to the intron maturase 2 family. MatK subfamily.

Its subcellular location is the plastid. It is found in the chloroplast. Functionally, usually encoded in the trnK tRNA gene intron. Probably assists in splicing its own and other chloroplast group II introns. The polypeptide is Maturase K (Lablab purpureus (Hyacinth bean)).